A 452-amino-acid polypeptide reads, in one-letter code: Tripartite motif-containing protein 51G (452 aa).

An RING-type zinc finger spans residues C15–K56. Residues S88–T129 form a B box-type zinc finger. Zn(2+)-binding residues include C93, H96, C115, and H121. The B30.2/SPRY domain maps to E269 to F452.

This sequence belongs to the TRIM/RBCC family.

The chain is Tripartite motif-containing protein 51G from Homo sapiens (Human).